The primary structure comprises 646 residues: Long-chain fatty acid transport protein 1 (646 aa).

The Extracellular segment spans residues 1–13 (MRAPGAGAASVVS). A helical transmembrane segment spans residues 14 to 34 (LALLWLLGLPWTWSAAAALGV). Residues 35–646 (YVGSGGWRFL…TRICSGAFAL (612 aa)) lie on the Cytoplasmic side of the membrane. The sufficient for oligomerization stretch occupies residues 191-475 (EVSGHLGKSL…YVSESATSKK (285 aa)). Residue 246–257 (YIYTSGTTGLPK) participates in AMP binding.

This sequence belongs to the ATP-dependent AMP-binding enzyme family. Self-associates. May function as a homodimer. Interacts with EPRS1; mediates the translocation of SLC27A1 from the cytoplasm to the plasma membrane thereby increasing the uptake of long-chain fatty acids. Interacts with DGAT2 and this interaction is enhanced in the presence of ZFYVE1. Highest levels of expression are detected in muscle and adipose tissue small, intermediate levels in small intestine, and barely detectable in liver. Expressed in brain gray matter.

The protein resides in the cell membrane. It is found in the endomembrane system. Its subcellular location is the cytoplasm. The enzyme catalyses a fatty acid(in) = a fatty acid(out). It catalyses the reaction (9Z)-octadecenoate(out) = (9Z)-octadecenoate(in). It carries out the reaction hexadecanoate(out) = hexadecanoate(in). The catalysed reaction is (9Z,12Z)-octadecadienoate(out) = (9Z,12Z)-octadecadienoate(in). The enzyme catalyses (5Z,8Z,11Z,14Z)-eicosatetraenoate(out) = (5Z,8Z,11Z,14Z)-eicosatetraenoate(in). It catalyses the reaction a long-chain fatty acid + ATP + CoA = a long-chain fatty acyl-CoA + AMP + diphosphate. It carries out the reaction (5Z,8Z,11Z,14Z)-eicosatetraenoate + ATP + CoA = (5Z,8Z,11Z,14Z)-eicosatetraenoyl-CoA + AMP + diphosphate. The catalysed reaction is a very long-chain fatty acid + ATP + CoA = a very long-chain fatty acyl-CoA + AMP + diphosphate. The enzyme catalyses tetracosanoate + ATP + CoA = tetracosanoyl-CoA + AMP + diphosphate. With respect to regulation, inhibited by Triacsin C. In terms of biological role, mediates the import of long-chain fatty acids (LCFA) into the cell by facilitating their transport at the plasma membrane. Also functions as an acyl-CoA ligase catalyzing the ATP-dependent formation of fatty acyl-CoA using LCFA and very-long-chain fatty acids (VLCFA) as substrates, which prevents fatty acid efflux from cells and might drive more fatty acid uptake. May act directly as a bona fide transporter, or alternatively, in a cytoplasmic or membrane-associated multimeric protein complex to trap and draw fatty acids towards accumulation. Plays a pivotal role in regulating available LCFA substrates from exogenous sources in tissues undergoing high levels of beta-oxidation or triglyceride synthesis. May be involved in regulation of cholesterol metabolism. Probably involved in fatty acid transport across the blood barrier. This is Long-chain fatty acid transport protein 1 from Homo sapiens (Human).